The following is a 573-amino-acid chain: Pentatricopeptide repeat-containing protein At3g62890 (573 aa).

PPR repeat units lie at residues 23–60 (ESFL…RVSP), 61–95 (DFHT…GLDK), 96–126 (DPFV…SGSK), 127–161 (DLPA…NVIS), 162–188 (WSCL…MQLP), 198–232 (NEFT…HVEI), 233–263 (DIVL…LGSK), 265–295 (DVKA…MTTS), 301–336 (NSVT…GITP), and 337–367 (SIQH…MPME). The type E motif; degenerate stretch occupies residues 372–447 (IWGSLLSGSR…VPGCSYVEVE (76 aa)). A type E(+) motif region spans residues 448–478 (GVVHEFVVGDESQQESERIYAMLDEIMQRLR). The segment at 479 to 573 (EAGYVTDTKE…DGSCSCRDFW (95 aa)) is type DYW motif.

Belongs to the PPR family. PCMP-H subfamily.

This chain is Pentatricopeptide repeat-containing protein At3g62890 (PCMP-H82), found in Arabidopsis thaliana (Mouse-ear cress).